A 352-amino-acid polypeptide reads, in one-letter code: Ion-translocating oxidoreductase complex subunit D (352 aa).

4 helical membrane passes run 20–40, 42–62, 69–91, and 123–143; these read IMLL…WFFG, GTLF…AIVL, VASH…SIPP, and PAMI…TSWL. Thr-187 is modified (FMN phosphoryl threonine). 5 helical membrane-spanning segments follow: residues 215–235, 242–262, 267–287, 301–321, and 322–342; these read LAGV…VFLL, WHIP…GWLF, LASP…FFIL, LIFG…GGYP, and DGVA…DYYT.

This sequence belongs to the NqrB/RnfD family. As to quaternary structure, the complex is composed of six subunits: RsxA, RsxB, RsxC, RsxD, RsxE and RsxG. FMN serves as cofactor.

The protein resides in the cell inner membrane. Functionally, part of a membrane-bound complex that couples electron transfer with translocation of ions across the membrane. Required to maintain the reduced state of SoxR. This chain is Ion-translocating oxidoreductase complex subunit D, found in Salmonella typhi.